A 1377-amino-acid polypeptide reads, in one-letter code: Neogenin (1377 aa).

A signal peptide spans 1–2 (AA). Residues 3 to 1074 (AKNGSPPQSA…PTSPLDSNML (1072 aa)) are Extracellular-facing. Ig-like C2-type domains lie at 21–114 (PLYF…RTAK), 121–206 (PRFT…EAEL), 198–305 (PKFS…AELT), and 310–395 (PEFL…AQLI). Asn42 is a glycosylation site (N-linked (GlcNAc...) asparagine). Intrachain disulfides connect Cys43–Cys98, Cys142–Cys190, and Cys239–Cys289. The N-linked (GlcNAc...) asparagine glycan is linked to Asn179. N-linked (GlcNAc...) asparagine glycosylation is present at Asn295. A disulfide bridge connects residues Cys331 and Cys379. Fibronectin type-III domains are found at residues 410–504 (APRD…TQPE), 510–600 (PAPN…TLSD), 605–700 (APQN…TFES), 710–800 (VPSS…RPHT), 825–924 (PPVG…LVPT), and 926–1023 (PPKD…TPKA). 2 N-linked (GlcNAc...) asparagine glycosylation sites follow: Asn439 and Asn458. 2 N-linked (GlcNAc...) asparagine glycosylation sites follow: Asn608 and Asn684. N-linked (GlcNAc...) asparagine glycosylation occurs at Asn878. Positions 1010 to 1066 (GPMSEAVQFRTPKADSSDKMPNDQALGSAGKGGRLPDLGSDYKPPMSGSNSPHGSPT) are disordered. Residues 1021–1030 (PKADSSDKMP) show a composition bias toward basic and acidic residues. The span at 1056-1066 (SGSNSPHGSPT) shows a compositional bias: polar residues. Residues 1075–1095 (LVIIVSIGVITIVVVVIIAVF) form a helical membrane-spanning segment. Over 1096 to 1377 (CTRRTTSHQK…MKDLNAITTA (282 aa)) the chain is Cytoplasmic. The tract at residues 1143–1281 (PIDKSPDPNP…SHPLKSFAVP (139 aa)) is disordered. 2 positions are modified to phosphoserine: Ser1147 and Ser1163. Polar residues-rich tracts occupy residues 1160 to 1176 (PRNS…MDSN), 1213 to 1238 (QPPQ…TCCT), and 1246 to 1265 (ATSS…QSLP). Thr1167 carries the post-translational modification Phosphothreonine. A Phosphoserine modification is found at Ser1317. The residue at position 1320 (Thr1320) is a Phosphothreonine. 3 positions are modified to phosphoserine: Ser1348, Ser1350, and Ser1351.

Belongs to the immunoglobulin superfamily. DCC family. Interacts with MYO10. Interacts with RGMA and RGMB. Interacts with BMP2, BMP4, BMP6, and BMP7.

It localises to the cell membrane. Functionally, multi-functional cell surface receptor regulating cell adhesion in many diverse developmental processes, including neural tube and mammary gland formation, myogenesis and angiogenesis. Receptor for members of the BMP, netrin, and repulsive guidance molecule (RGM) families. Netrin-Neogenin interactions result in a chemoattractive axon guidance response and cell-cell adhesion, the interaction between NEO1/Neogenin and RGMa and RGMb induces a chemorepulsive response. This Rattus norvegicus (Rat) protein is Neogenin (Neo1).